The chain runs to 893 residues: UPF0182 protein CLI_0022 (893 aa).

Helical transmembrane passes span 9–29 (IPLF…NFII), 49–69 (AIII…WMYY), 94–114 (LFFI…SSSY), 154–174 (VIIS…FILE), 202–222 (LAIV…IKIW), 246–266 (FYKI…LSIV), and 273–293 (VSIC…ASFL).

This sequence belongs to the UPF0182 family.

Its subcellular location is the cell membrane. In Clostridium botulinum (strain Langeland / NCTC 10281 / Type F), this protein is UPF0182 protein CLI_0022.